A 293-amino-acid polypeptide reads, in one-letter code: 4-diphosphocytidyl-2-C-methyl-D-erythritol kinase (293 aa).

Residue K10 is part of the active site. 96–106 (PIAAGLGGGSS) contributes to the ATP binding site. Residue D138 is part of the active site.

The protein belongs to the GHMP kinase family. IspE subfamily.

It catalyses the reaction 4-CDP-2-C-methyl-D-erythritol + ATP = 4-CDP-2-C-methyl-D-erythritol 2-phosphate + ADP + H(+). It participates in isoprenoid biosynthesis; isopentenyl diphosphate biosynthesis via DXP pathway; isopentenyl diphosphate from 1-deoxy-D-xylulose 5-phosphate: step 3/6. Its function is as follows. Catalyzes the phosphorylation of the position 2 hydroxy group of 4-diphosphocytidyl-2C-methyl-D-erythritol. The polypeptide is 4-diphosphocytidyl-2-C-methyl-D-erythritol kinase (Caulobacter sp. (strain K31)).